Here is a 1048-residue protein sequence, read N- to C-terminus: Copper-dependent transcription factor 1 (1048 aa).

A DNA-binding region (copper-fist) is located at residues 1–40 (MVLINDKKFACEKCIKGHRVSACTHTDRPLFEVKKKGRPS). Cys11, Cys14, Cys23, and His25 together coordinate Zn(2+). The span at 85–99 (ANESGGASATANTSA) shows a compositional bias: low complexity. Disordered regions lie at residues 85–117 (ANES…PTFP) and 178–273 (HSGH…RPPV). Residues 211-222 (TRNSPTSINSSE) show a composition bias toward polar residues. Residues 348–362 (CMCGDDCSCPGCATH) carry the CRM-I motif. The CRM-II motif lies at 455 to 482 (CCGGKCGCPPGECACTKQCCGCCGECTC). Disordered stretches follow at residues 506–702 (SSCG…PLNS) and 835–876 (GPSG…WKFP). Composition is skewed to polar residues over residues 527–536 (QIPQSVSPTS), 550–565 (PVST…SFNT), 629–645 (GSMT…GVRR), 664–682 (SIQS…SNQI), and 692–702 (APSQMTAPLNS). Over residues 835 to 845 (GPSGPSAIPAT) the composition is skewed to low complexity. A compositionally biased stretch (polar residues) spans 846 to 868 (NIPSRHTTPQASRPLTPPESSFT).

It localises to the nucleus. The protein resides in the cytoplasm. The protein localises to the cell cortex. Transcription factor that regulates copper acquisition and homeostasis, and which plays a central role in fungal pathogenesis during neurologic infection. The transcriptional regulation exerted by CUF1 is intrinsically complex since it acts as a dual sensor of copper levels, responsible for expression of a set of copper-specific copper transporters, CTR1 and CTR4, at low copper concentrations, and 2 metallothioneins, CMT1 and CMT2, at high copper concentrations. Positively regulates the expression of the copper acquisition factor BIM1 under copper-limiting conditions. Also positively regulates the expression of super oxide dismutase SOD2 isoform 2 during oxidative stress and copper-limiting conditions. Negatively regulates the expression of super oxide dismutase SOD1 during copper-limiting conditions. Also regulates ATM1, an ABC transporter with functions in the iron-sulfur clusters (ISC) export machinery, during copper stress. Another target of CUF1 is the gene encoding the laccase LAC1. Binds promoters of target genes at Cu-responsive elements (CuREs) that contain a variable A/T rich 5' region followed by the core consensus sequence 5'-G(G/C)CTC(A/G)-3'. Negatively regulates capsule biosynthesis, probably via modulating iron acquisition through the high-affinity iron uptake pathway. In Cryptococcus neoformans var. grubii serotype A (strain H99 / ATCC 208821 / CBS 10515 / FGSC 9487) (Filobasidiella neoformans var. grubii), this protein is Copper-dependent transcription factor 1.